The primary structure comprises 150 residues: D-aminoacyl-tRNA deacylase (150 aa).

A Gly-cisPro motif, important for rejection of L-amino acids motif is present at residues 138-139 (GP).

This sequence belongs to the DTD family. In terms of assembly, homodimer.

The protein resides in the cytoplasm. It catalyses the reaction glycyl-tRNA(Ala) + H2O = tRNA(Ala) + glycine + H(+). It carries out the reaction a D-aminoacyl-tRNA + H2O = a tRNA + a D-alpha-amino acid + H(+). Functionally, an aminoacyl-tRNA editing enzyme that deacylates mischarged D-aminoacyl-tRNAs. Also deacylates mischarged glycyl-tRNA(Ala), protecting cells against glycine mischarging by AlaRS. Acts via tRNA-based rather than protein-based catalysis; rejects L-amino acids rather than detecting D-amino acids in the active site. By recycling D-aminoacyl-tRNA to D-amino acids and free tRNA molecules, this enzyme counteracts the toxicity associated with the formation of D-aminoacyl-tRNA entities in vivo and helps enforce protein L-homochirality. This Azobacteroides pseudotrichonymphae genomovar. CFP2 protein is D-aminoacyl-tRNA deacylase.